An 84-amino-acid chain; its full sequence is Large ribosomal subunit protein bL27 (84 aa).

The protein belongs to the bacterial ribosomal protein bL27 family.

The sequence is that of Large ribosomal subunit protein bL27 from Campylobacter jejuni subsp. jejuni serotype O:6 (strain 81116 / NCTC 11828).